A 296-amino-acid chain; its full sequence is MTSTITRKEDGEGSVQVKQDPKAQIQEGALVIAVYGKGGIGKSTTSSNLSAAFSKLGKKVLQIGCDPKHDSTFTLTHKMVPTVIDILEEVDFHSEELRPEDFMFKGFNGVMCVESGGPPAGTGCGGYVTGQTVKLLKEHHLLEDTDVVIFDVLGDVVCGGFAAPLQHANYCLIVTANDFDSIFAMNRIVAAINAKAKNYKVRLGGVIANRSAELDQIEKFNERTGLKTMAHFRNVDAIRRSRLKKCTIFEMDSEEEGVVEVQNEYLSLAQKMIDNVEPLEAEPLKDREIFDLLGFD.

Positions methionine 1–glycine 11 are enriched in basic and acidic residues. The interval methionine 1–aspartate 20 is disordered. ATP-binding positions include glycine 39–threonine 44 and lysine 68. Residue serine 43 participates in Mg(2+) binding. [4Fe-4S] cluster contacts are provided by cysteine 124 and cysteine 158. Asparagine 209 to arginine 210 serves as a coordination point for ATP.

It belongs to the NifH/BchL/ChlL family. As to quaternary structure, homodimer. Protochlorophyllide reductase is composed of three subunits; ChlL, ChlN and ChlB. [4Fe-4S] cluster is required as a cofactor.

The enzyme catalyses chlorophyllide a + oxidized 2[4Fe-4S]-[ferredoxin] + 2 ADP + 2 phosphate = protochlorophyllide a + reduced 2[4Fe-4S]-[ferredoxin] + 2 ATP + 2 H2O. It functions in the pathway porphyrin-containing compound metabolism; chlorophyll biosynthesis (light-independent). In terms of biological role, component of the dark-operative protochlorophyllide reductase (DPOR) that uses Mg-ATP and reduced ferredoxin to reduce ring D of protochlorophyllide (Pchlide) to form chlorophyllide a (Chlide). This reaction is light-independent. The L component serves as a unique electron donor to the NB-component of the complex, and binds Mg-ATP. In Prochlorococcus marinus (strain NATL1A), this protein is Light-independent protochlorophyllide reductase iron-sulfur ATP-binding protein.